The sequence spans 137 residues: Large ribosomal subunit protein uL16 (137 aa).

It belongs to the universal ribosomal protein uL16 family. As to quaternary structure, part of the 50S ribosomal subunit.

Binds 23S rRNA and is also seen to make contacts with the A and possibly P site tRNAs. This chain is Large ribosomal subunit protein uL16, found in Bartonella bacilliformis (strain ATCC 35685 / KC583 / Herrer 020/F12,63).